A 71-amino-acid polypeptide reads, in one-letter code: DNA-directed RNA polymerase subunit omega (71 aa).

This sequence belongs to the RNA polymerase subunit omega family. The RNAP catalytic core consists of 2 alpha, 1 beta, 1 beta' and 1 omega subunit. When a sigma factor is associated with the core the holoenzyme is formed, which can initiate transcription.

The catalysed reaction is RNA(n) + a ribonucleoside 5'-triphosphate = RNA(n+1) + diphosphate. In terms of biological role, promotes RNA polymerase assembly. Latches the N- and C-terminal regions of the beta' subunit thereby facilitating its interaction with the beta and alpha subunits. This chain is DNA-directed RNA polymerase subunit omega, found in Levilactobacillus brevis (strain ATCC 367 / BCRC 12310 / CIP 105137 / JCM 1170 / LMG 11437 / NCIMB 947 / NCTC 947) (Lactobacillus brevis).